We begin with the raw amino-acid sequence, 522 residues long: Peptide chain release factor 3 (522 aa).

The 268-residue stretch at 10 to 277 (ASRKTFAIIS…TFVDFAPSPS (268 aa)) folds into the tr-type G domain. Residues 19–26 (SHPDAGKT), 87–91 (DTPGH), and 141–144 (NKMD) contribute to the GTP site.

Belongs to the TRAFAC class translation factor GTPase superfamily. Classic translation factor GTPase family. PrfC subfamily.

The protein resides in the cytoplasm. In terms of biological role, increases the formation of ribosomal termination complexes and stimulates activities of RF-1 and RF-2. It binds guanine nucleotides and has strong preference for UGA stop codons. It may interact directly with the ribosome. The stimulation of RF-1 and RF-2 is significantly reduced by GTP and GDP, but not by GMP. The chain is Peptide chain release factor 3 from Listeria monocytogenes serotype 4b (strain CLIP80459).